The following is a 300-amino-acid chain: Taste receptor type 2 member 105 (300 aa).

Residues 1-7 (MLSAAEG) are Extracellular-facing. Residues 8–28 (ILLSIATVEAGLGVLGNTFIA) traverse the membrane as a helical segment. Over 29-43 (LVNCMDWAKNNKLSM) the chain is Cytoplasmic. A helical membrane pass occupies residues 44 to 64 (TGFLLIGLATSRIFIVWLLTL). Residues 65–87 (DAYAKLFYPSKYFSSSLIEIISY) are Extracellular-facing. The helical transmembrane segment at 88-108 (IWMTVNHLTVWFATSLSIFYF) threads the bilayer. Residues 109–128 (LKIANFSDCVFLWLKRRTDK) lie on the Cytoplasmic side of the membrane. A helical membrane pass occupies residues 129–149 (AFVFLLGCLLTSWVISFSFVV). At 150–181 (KVMKDGKVNHRNRTSEMYWEKRQFTINYVFLN) the chain is on the extracellular side. An N-linked (GlcNAc...) asparagine glycan is attached at Asn161. The helical transmembrane segment at 182–202 (IGVISLFMMTLTACFLLIMSL) threads the bilayer. Residues 203 to 233 (WRHSRQMQSGVSGFRDLNTEAHVKAIKFLIS) are Cytoplasmic-facing. Residues 234-254 (FIILFVLYFIGVSIEIICIFI) traverse the membrane as a helical segment. The Extracellular portion of the chain corresponds to 255–259 (PENKL). The chain crosses the membrane as a helical span at residues 260-280 (LFIFGFTTASIYPCCHSFILI). The Cytoplasmic portion of the chain corresponds to 281–300 (LSNSQLKQAFVKVLQGLKFF).

The protein belongs to the G-protein coupled receptor T2R family. As to expression, expressed in subsets of taste receptor cells of the tongue and palate epithelium and exclusively in gustducin-positive cells. Expressed in gastric and duodenal tissues.

It is found in the membrane. Gustducin-coupled cycloheximide receptor implicated in the perception of bitter compounds in the oral cavity and the gastrointestinal tract. Signals through PLCB2 and the calcium-regulated cation channel TRPM5. The sequence is that of Taste receptor type 2 member 105 (Tas2r105) from Mus musculus (Mouse).